Reading from the N-terminus, the 138-residue chain is Small ribosomal subunit protein uS9 (138 aa).

Positions Asp-99 to Arg-138 are disordered. Residues Pro-100–Ala-118 show a composition bias toward basic and acidic residues. Residues Lys-119–Arg-138 are compositionally biased toward basic residues.

Belongs to the universal ribosomal protein uS9 family.

This is Small ribosomal subunit protein uS9 from Nostoc punctiforme (strain ATCC 29133 / PCC 73102).